Here is a 307-residue protein sequence, read N- to C-terminus: tRNA-cytidine(32) 2-sulfurtransferase (307 aa).

The PP-loop motif motif lies at 44 to 49 (SGGKDS). [4Fe-4S] cluster contacts are provided by cysteine 119, cysteine 122, and cysteine 210.

This sequence belongs to the TtcA family. As to quaternary structure, homodimer. Mg(2+) serves as cofactor. It depends on [4Fe-4S] cluster as a cofactor.

It localises to the cytoplasm. The catalysed reaction is cytidine(32) in tRNA + S-sulfanyl-L-cysteinyl-[cysteine desulfurase] + AH2 + ATP = 2-thiocytidine(32) in tRNA + L-cysteinyl-[cysteine desulfurase] + A + AMP + diphosphate + H(+). Its pathway is tRNA modification. Functionally, catalyzes the ATP-dependent 2-thiolation of cytidine in position 32 of tRNA, to form 2-thiocytidine (s(2)C32). The sulfur atoms are provided by the cysteine/cysteine desulfurase (IscS) system. This chain is tRNA-cytidine(32) 2-sulfurtransferase, found in Aliivibrio fischeri (strain ATCC 700601 / ES114) (Vibrio fischeri).